The sequence spans 709 residues: NAD(P)H-quinone oxidoreductase subunit 5, chloroplastic (709 aa).

Helical transmembrane passes span 9–29 (WIIPFVPLPIPIKIGMGLLLF), 40–60 (WAFPNILLLSIVMIFSVDLSI), 89–109 (IDSLTSIMSILITTVGIFVLI), 125–145 (FAYMSLFNTSMLGLLTXSNLI), 147–167 (IYXFWELVGMCSYLLIGFWFT), 219–239 (NEVHFLFVTLCASLLFAGAVA), 257–277 (PTPISALIHAATMVAAGIFLV), 280–300 (LLPLFIVIPYIMNLISLIGII), 327–347 (LGYMMLALGMGSYRAALFHLI), 354–374 (ALLFLGSGSIIHSMEAIVGYS), 396–416 (IAFLVGTLSLCGIPPLACFWS), 425–445 (WLYSPIFAIIAWSTAGLTASY), 540–560 (LFPMLILVLFTLFVGAIAIPF), and 594–614 (FLTNATFSVSIASFGIFTAFL).

The protein belongs to the complex I subunit 5 family. As to quaternary structure, NDH is composed of at least 16 different subunits, 5 of which are encoded in the nucleus.

The protein localises to the plastid. The protein resides in the chloroplast thylakoid membrane. The enzyme catalyses a plastoquinone + NADH + (n+1) H(+)(in) = a plastoquinol + NAD(+) + n H(+)(out). It carries out the reaction a plastoquinone + NADPH + (n+1) H(+)(in) = a plastoquinol + NADP(+) + n H(+)(out). In terms of biological role, NDH shuttles electrons from NAD(P)H:plastoquinone, via FMN and iron-sulfur (Fe-S) centers, to quinones in the photosynthetic chain and possibly in a chloroplast respiratory chain. The immediate electron acceptor for the enzyme in this species is believed to be plastoquinone. Couples the redox reaction to proton translocation, and thus conserves the redox energy in a proton gradient. This is NAD(P)H-quinone oxidoreductase subunit 5, chloroplastic (ndhF) from Pachira aquatica (Guiana chestnut).